Reading from the N-terminus, the 603-residue chain is DNA mismatch repair protein MutL (603 aa).

This sequence belongs to the DNA mismatch repair MutL/HexB family.

This protein is involved in the repair of mismatches in DNA. It is required for dam-dependent methyl-directed DNA mismatch repair. May act as a 'molecular matchmaker', a protein that promotes the formation of a stable complex between two or more DNA-binding proteins in an ATP-dependent manner without itself being part of a final effector complex. This is DNA mismatch repair protein MutL from Nitrobacter hamburgensis (strain DSM 10229 / NCIMB 13809 / X14).